Consider the following 387-residue polypeptide: Ferrochelatase (387 aa).

Fe cation-binding residues include His196 and Glu277.

Belongs to the ferrochelatase family.

The protein resides in the cytoplasm. It catalyses the reaction heme b + 2 H(+) = protoporphyrin IX + Fe(2+). Its pathway is porphyrin-containing compound metabolism; protoheme biosynthesis; protoheme from protoporphyrin-IX: step 1/1. Catalyzes the ferrous insertion into protoporphyrin IX. The chain is Ferrochelatase from Rippkaea orientalis (strain PCC 8801 / RF-1) (Cyanothece sp. (strain PCC 8801)).